We begin with the raw amino-acid sequence, 218 residues long: Ras-related protein Rab-11B (218 aa).

Position 2 is an N-acetylglycine (Gly2). At Arg4 the chain carries Citrulline. Ser20, Gly21, Gly23, Lys24, Ser25, Asn26, Asn37, Leu38, Ser40, Ser42, and Thr43 together coordinate GTP. Position 25 (Ser25) interacts with Mg(2+). The Switch 1 signature appears at 36 to 47 (FNLESKSTIGVE). Mg(2+) is bound by residues Thr43 and Asp66. Positions 67–86 (TAGQERYRAITSAYYRGAVG) match the Switch 2 motif. Residues Gly69, Asn124, Lys125, Asp127, Ala155, and Leu156 each coordinate GTP. Residues 184 to 218 (RAAHDESPGNNVVDISVPPTTDGQRPNKLQCCQSL) form a disordered region. 2 S-geranylgeranyl cysteine lipidation sites follow: Cys214 and Cys215. At Cys215 the chain carries Cysteine methyl ester. Positions 216–218 (QSL) are cleaved as a propeptide — removed in mature form.

It belongs to the small GTPase superfamily. Rab family. As to quaternary structure, interacts with KCNMA1. Interacts with RAB11FIP1, RAB11FIP2, RAB11FIP3 and RAB11FIP4. May interact with TBC1D14. Interacts with ATP6V1E1. Interacts with PI4KB. Interacts (GDP-bound form) with ZFYVE27. Interacts (GDP-bound form) with KIF5A in a ZFYVE27-dependent manner. Interacts with RELCH. Interacts (in GTP-bound form) with TBC1D8B (via domain Rab-GAP TBC). Forms a complex containing RAB11B, ASAP1, Rabin8/RAB3IP, RAP11FIP3 and ARF4. Interacts with WDR44. Mg(2+) is required as a cofactor. Post-translationally, citrullinated by PADI4. Abundantly expressed in brain, heart and testis. Also detected in kidney and pancreatic islets.

The protein resides in the recycling endosome membrane. Its subcellular location is the cytoplasmic vesicle. It localises to the secretory vesicle. The protein localises to the synaptic vesicle membrane. It is found in the phagosome membrane. The catalysed reaction is GTP + H2O = GDP + phosphate + H(+). Its activity is regulated as follows. Regulated by guanine nucleotide exchange factors (GEFs) which promote the exchange of bound GDP for free GTP. Regulated by GTPase activating proteins (GAPs) which increase the GTP hydrolysis activity. Inhibited by GDP dissociation inhibitors (GDIs) which prevent Rab-GDP dissociation. The small GTPases Rab are key regulators of intracellular membrane trafficking, from the formation of transport vesicles to their fusion with membranes. Rabs cycle between an inactive GDP-bound form and an active GTP-bound form that is able to recruit to membranes different set of downstream effectors directly responsible for vesicle formation, movement, tethering and fusion. The small Rab GTPase RAB11B plays a role in endocytic recycling, regulating apical recycling of several transmembrane proteins including cystic fibrosis transmembrane conductance regulator/CFTR, epithelial sodium channel/ENaC, potassium voltage-gated channel, and voltage-dependent L-type calcium channel. May also regulate constitutive and regulated secretion, like insulin granule exocytosis. Required for melanosome transport and release from melanocytes. Also regulates V-ATPase intracellular transport in response to extracellular acidosis. Promotes Rabin8/RAB3IP preciliary vesicular trafficking to mother centriole by forming a ciliary targeting complex containing Rab11, ASAP1, Rabin8/RAB3IP, RAB11FIP3 and ARF4, thereby regulating ciliogenesis initiation. On the contrary, upon LPAR1 receptor signaling pathway activation, interaction with phosphorylated WDR44 prevents Rab11-RAB3IP-RAB11FIP3 complex formation and cilia growth. The protein is Ras-related protein Rab-11B of Mus musculus (Mouse).